The following is a 542-amino-acid chain: Adenosylmethionine-8-amino-7-oxononanoate aminotransferase (542 aa).

170–171 (GS) provides a ligand contact to pyridoxal 5'-phosphate. Y205 contacts substrate. Residue D311 coordinates pyridoxal 5'-phosphate. 3 residues coordinate substrate: K340, G375, and R470. K340 is subject to N6-(pyridoxal phosphate)lysine. The segment at 509–542 (DGGLWTKRPDGPDNPDKANTPDTPDGARTGETVV) is disordered. Residues 515 to 524 (KRPDGPDNPD) show a composition bias toward basic and acidic residues.

It belongs to the class-III pyridoxal-phosphate-dependent aminotransferase family. BioA subfamily. As to quaternary structure, homodimer. Requires pyridoxal 5'-phosphate as cofactor.

The protein resides in the cytoplasm. It catalyses the reaction (8S)-8-amino-7-oxononanoate + S-adenosyl-L-methionine = S-adenosyl-4-methylsulfanyl-2-oxobutanoate + (7R,8S)-7,8-diammoniononanoate. It functions in the pathway cofactor biosynthesis; biotin biosynthesis; 7,8-diaminononanoate from 8-amino-7-oxononanoate (SAM route): step 1/1. Its function is as follows. Catalyzes the transfer of the alpha-amino group from S-adenosyl-L-methionine (SAM) to 7-keto-8-aminopelargonic acid (KAPA) to form 7,8-diaminopelargonic acid (DAPA). It is the only aminotransferase known to utilize SAM as an amino donor. The protein is Adenosylmethionine-8-amino-7-oxononanoate aminotransferase of Nitratidesulfovibrio vulgaris (strain ATCC 29579 / DSM 644 / CCUG 34227 / NCIMB 8303 / VKM B-1760 / Hildenborough) (Desulfovibrio vulgaris).